The sequence spans 110 residues: SLFAPSALVLTVGEGESAADSGVQRAVTLTCTPKASGTHPAARAACDQLRAVDGDFKALVTTKSDRVCTKEYRPIVITAEGVWDGHRVSYEHKFANPCMASDGKGVVFEF.

2 cysteine pairs are disulfide-bonded: C31–C46 and C68–C98.

Belongs to the protease inhibitor I16 (SSI) family. In terms of assembly, homodimer.

It is found in the secreted. In Streptomyces netropsis (Streptoverticillium netropsis), this protein is Protease inhibitor SIL-V1/SIL-V4.